Consider the following 351-residue polypeptide: Leukotriene B4 receptor 1 (351 aa).

Residues 1–21 lie on the Extracellular side of the membrane; it reads MAANTTSTAATSSPGGMSLSL. N4 carries an N-linked (GlcNAc...) asparagine glycan. A helical membrane pass occupies residues 22–44; the sequence is LPIVLLSVALVVGLPGNSFVVWS. Topologically, residues 45–56 are cytoplasmic; it reads ILKRMQKRSVTA. The helical transmembrane segment at 57–77 threads the bilayer; that stretch reads LLVLNLALADLAVLLTAPFFL. Over 78 to 93 the chain is Extracellular; that stretch reads HFLARGTWSFEVTGCR. Residues 94-115 form a helical membrane-spanning segment; sequence LCHYVCGVSMYASVLLITIMSL. Residues 116–140 are Cytoplasmic-facing; it reads DRSLAVARPFVSQKVRTKAFARWVL. The chain crosses the membrane as a helical span at residues 141–161; it reads AGIWVVSFLLAIPVLVYRTVT. Residues 162–179 are Extracellular-facing; the sequence is PKNKTLICDSRYPSDGHK. N-linked (GlcNAc...) asparagine glycosylation is present at N164. The helical transmembrane segment at 180–200 threads the bilayer; it reads VFHLLFEAITGFLLPFLAVVA. Topologically, residues 201-222 are cytoplasmic; it reads SYSDIGRRLQARRFRRSRRTGR. The helical transmembrane segment at 223–243 threads the bilayer; that stretch reads LVVLIILAFAAFWLPYHLVNL. At 244–268 the chain is on the extracellular side; sequence VEAGRTLAGWDKNSPAGQRLKLARY. The helical transmembrane segment at 269–289 threads the bilayer; that stretch reads VLIALAFLSSSVNPVLYACAG. The Cytoplasmic segment spans residues 290–351; that stretch reads GGLLRSAGVG…TSSTPPESSK (62 aa). Polar residues-rich tracts occupy residues 311–327 and 339–351; these read EVSS…TPKA and SFMT…ESSK. The segment at 311–351 is disordered; it reads EVSSTRRGGTLVQTPKATPTCPEPGPTDSFMTSSTPPESSK.

It belongs to the G-protein coupled receptor 1 family. Post-translationally, phosphorylated by GRK6 upon leukotriene B4 binding; which promotes desensitization. As to expression, exclusively expressed in polymorphonuclear leukocytes.

It is found in the cell membrane. In terms of biological role, receptor for leukotriene B4, a potent chemoattractant involved in inflammation and immune response. The sequence is that of Leukotriene B4 receptor 1 (Ltb4r) from Rattus norvegicus (Rat).